A 141-amino-acid chain; its full sequence is Large ribosomal subunit protein uL11 (141 aa).

The protein belongs to the universal ribosomal protein uL11 family. Part of the ribosomal stalk of the 50S ribosomal subunit. Interacts with L10 and the large rRNA to form the base of the stalk. L10 forms an elongated spine to which L12 dimers bind in a sequential fashion forming a multimeric L10(L12)X complex. In terms of processing, one or more lysine residues are methylated.

Functionally, forms part of the ribosomal stalk which helps the ribosome interact with GTP-bound translation factors. The chain is Large ribosomal subunit protein uL11 from Streptococcus pneumoniae (strain Hungary19A-6).